The sequence spans 193 residues: Lipopolysaccharide core heptose(II)-phosphate phosphatase (193 aa).

An N-terminal signal peptide occupies residues 1–25 (MKLKKHVAVLLISFLCLIGLVTQHA).

The protein belongs to the phosphoglycerate mutase family. Ais subfamily.

It localises to the periplasm. The protein operates within bacterial outer membrane biogenesis; lipopolysaccharide metabolism. Its function is as follows. Catalyzes the dephosphorylation of heptose(II) of the outer membrane lipopolysaccharide core. The chain is Lipopolysaccharide core heptose(II)-phosphate phosphatase from Escherichia fergusonii (strain ATCC 35469 / DSM 13698 / CCUG 18766 / IAM 14443 / JCM 21226 / LMG 7866 / NBRC 102419 / NCTC 12128 / CDC 0568-73).